We begin with the raw amino-acid sequence, 323 residues long: Acetyl-coenzyme A carboxylase carboxyl transferase subunit alpha (323 aa).

A CoA carboxyltransferase C-terminal domain is found at 39–293 (RLSKKSQQLT…RRALADSLRQ (255 aa)).

The protein belongs to the AccA family. As to quaternary structure, acetyl-CoA carboxylase is a heterohexamer composed of biotin carboxyl carrier protein (AccB), biotin carboxylase (AccC) and two subunits each of ACCase subunit alpha (AccA) and ACCase subunit beta (AccD).

Its subcellular location is the cytoplasm. The enzyme catalyses N(6)-carboxybiotinyl-L-lysyl-[protein] + acetyl-CoA = N(6)-biotinyl-L-lysyl-[protein] + malonyl-CoA. It participates in lipid metabolism; malonyl-CoA biosynthesis; malonyl-CoA from acetyl-CoA: step 1/1. Functionally, component of the acetyl coenzyme A carboxylase (ACC) complex. First, biotin carboxylase catalyzes the carboxylation of biotin on its carrier protein (BCCP) and then the CO(2) group is transferred by the carboxyltransferase to acetyl-CoA to form malonyl-CoA. This is Acetyl-coenzyme A carboxylase carboxyl transferase subunit alpha from Burkholderia orbicola (strain AU 1054).